A 314-amino-acid polypeptide reads, in one-letter code: tRNA dimethylallyltransferase (314 aa).

An ATP-binding site is contributed by 12–19 (GPTASGKT). Position 14–19 (14–19 (TASGKT)) interacts with substrate. Interaction with substrate tRNA regions lie at residues 37 to 40 (DSAL) and 162 to 166 (QRIIR).

It belongs to the IPP transferase family. As to quaternary structure, monomer. Mg(2+) is required as a cofactor.

It catalyses the reaction adenosine(37) in tRNA + dimethylallyl diphosphate = N(6)-dimethylallyladenosine(37) in tRNA + diphosphate. Its function is as follows. Catalyzes the transfer of a dimethylallyl group onto the adenine at position 37 in tRNAs that read codons beginning with uridine, leading to the formation of N6-(dimethylallyl)adenosine (i(6)A). This chain is tRNA dimethylallyltransferase, found in Acinetobacter baumannii (strain AB0057).